The sequence spans 246 residues: CTD nuclear envelope phosphatase 1 homolog (246 aa).

The helical transmembrane segment at 3–23 (TIAQSVFCFLAGFFNFFLLYF) threads the bilayer. An FCP1 homology domain is found at 53–220 (LTVKRKILVL…LNLLPFLDAL (168 aa)).

This sequence belongs to the dullard family.

The protein resides in the membrane. It localises to the nucleus envelope. It catalyses the reaction O-phospho-L-seryl-[protein] + H2O = L-seryl-[protein] + phosphate. It carries out the reaction O-phospho-L-threonyl-[protein] + H2O = L-threonyl-[protein] + phosphate. In terms of biological role, serine/threonine protein phosphatase that may dephosphorylate and activate lipin-like phosphatases. Lipins are phosphatidate phosphatases that catalyze the conversion of phosphatidic acid to diacylglycerol and control the metabolism of fatty acids at different levels. May indirectly modulate the lipid composition of nuclear and/or endoplasmic reticulum membranes and be required for proper nuclear membrane morphology and/or dynamics. Contributes to closure of nuclear envelope (NE) holes and prevents excess nuclear membranes after meiosis and mitosis, possibly through spatial regulation of lipin. May limit the production of endoplasmic reticulum (ER) sheets proximal to the NE to prevent the ER membranes that feed into NE openings from invading the nuclear interior and thereby restrict nuclear transport to nuclear pore complexes (NPCs). May also indirectly regulate the production of lipid droplets and triacylglycerol. In Caenorhabditis elegans, this protein is CTD nuclear envelope phosphatase 1 homolog (cnep-1).